We begin with the raw amino-acid sequence, 72 residues long: Large ribosomal subunit protein uL29 (72 aa).

The protein belongs to the universal ribosomal protein uL29 family.

This Chlamydia abortus (strain DSM 27085 / S26/3) (Chlamydophila abortus) protein is Large ribosomal subunit protein uL29.